Reading from the N-terminus, the 254-residue chain is MVSWMISRAVVLVFGMLYPAYYSYKAVKTKNVKEYVRWMMYWIVFALYTVIETVADQTLAWFPLYYELKIAFVIWLLSPYTRGASLIYRKFLHPLLSSKEREIDDYIVQAKERGYETMVNFGRQGLNLAAAAAVTAAVKSQGAITERLRSFSMHDLTAIQGDEPVGHRPYQTLPEAKRKGKQATESPAYGIPLKDGSEQTDEEAEGPFSDDEMVTHKALRRSQSMKSVKTIKGRKEVRYGSLKYKVKKRPQVYF.

The next 3 membrane-spanning stretches (helical) occupy residues 1–21 (MVSW…YPAY), 35–55 (YVRW…ETVA), and 59–79 (LAWF…LLSP). The segment at 162–232 (DEPVGHRPYQ…QSMKSVKTIK (71 aa)) is disordered. Acidic residues predominate over residues 198-212 (EQTDEEAEGPFSDDE). Phosphothreonine is present on Thr-200. The residue at position 209 (Ser-209) is a Phosphoserine.

It belongs to the DP1 family.

It localises to the endoplasmic reticulum membrane. In terms of biological role, microtubule-binding protein required to ensure proper cell division and nuclear envelope reassembly by sequestering the endoplasmic reticulum away from chromosomes during mitosis. Probably acts by clearing the endoplasmic reticulum membrane from metaphase chromosomes. This chain is Receptor expression-enhancing protein 3 (Reep3), found in Mus musculus (Mouse).